The sequence spans 141 residues: Large ribosomal subunit protein uL11 (141 aa).

The protein belongs to the universal ribosomal protein uL11 family. In terms of assembly, part of the ribosomal stalk of the 50S ribosomal subunit. Interacts with L10 and the large rRNA to form the base of the stalk. L10 forms an elongated spine to which L12 dimers bind in a sequential fashion forming a multimeric L10(L12)X complex. Post-translationally, one or more lysine residues are methylated.

Its function is as follows. Forms part of the ribosomal stalk which helps the ribosome interact with GTP-bound translation factors. The chain is Large ribosomal subunit protein uL11 from Phytoplasma australiense.